The primary structure comprises 798 residues: Protocadherin beta-14 (798 aa).

The N-terminal stretch at 1 to 26 (MEIRGALDLRKRQVLIFLVLLGLSRA) is a signal peptide. At 27–686 (GTESAHYSVA…APAQAQADSL (660 aa)) the chain is on the extracellular side. 5 consecutive Cadherin domains span residues 35 to 133 (VAEE…SPTF), 138 to 242 (ILIK…APEF), 247 to 347 (YEVQ…PPEV), 352 to 451 (ITKR…APAF), and 456 to 561 (YTLF…SPFV). A disulfide bridge links C96 with C102. An N-linked (GlcNAc...) asparagine glycan is attached at N169. N-linked (GlcNAc...) asparagine glycans are attached at residues N359, N418, and N436. N567 carries N-linked (GlcNAc...) asparagine glycosylation. Residues 568-671 (GSAPCTELVP…LVDGFSQPYL (104 aa)) enclose the Cadherin 6 domain. A helical membrane pass occupies residues 687-711 (TVYLVVALASVSSLFLFSVLLFVAV). The Cytoplasmic segment spans residues 712–798 (RLCRRSRAAS…FRNSFGLNIQ (87 aa)).

The protein localises to the cell membrane. Potential calcium-dependent cell-adhesion protein. May be involved in the establishment and maintenance of specific neuronal connections in the brain. The polypeptide is Protocadherin beta-14 (PCDHB14) (Pan troglodytes (Chimpanzee)).